The sequence spans 1653 residues: Alpha-2-macroglobulin (1653 aa).

The first 17 residues, 1-17, serve as a signal peptide directing secretion; sequence MKKLRVAACMLMLALAG. A lipid anchor (N-palmitoyl cysteine) is attached at cysteine 18. The S-diacylglycerol cysteine moiety is linked to residue cysteine 18. Residues 1187–1190 constitute a cross-link (isoglutamyl cysteine thioester (Cys-Gln)); it reads CLEQ. Residues 1559-1589 adopt a coiled-coil conformation; that stretch reads NQNLANGSASLEQSGGEVQNLLNQMQQASIK.

The protein belongs to the protease inhibitor I39 (alpha-2-macroglobulin) family. Bacterial alpha-2-macroglobulin subfamily. As to quaternary structure, may form homooligomers.

It is found in the cell inner membrane. Protects the bacterial cell from host peptidases. Acts by a 'trapping' mechanism. Cleavage of the bait-region domain by host peptidases leads to a global conformational change, which results in entrapment of the host peptidase and activation of the thioester bond that covalently binds the attacking host peptidase. Trapped peptidases are still active except against very large substrates. May protect the entire periplam, including the lipoproteins anchored to the periplasmic side of the outer membrane, against intruding endopeptidases. This is Alpha-2-macroglobulin (yfhM) from Escherichia coli (strain K12).